The primary structure comprises 402 residues: 3-dehydroquinate synthase (402 aa).

It belongs to the archaeal-type DHQ synthase family.

The enzyme catalyses 2-amino-2,3,7-trideoxy-D-lyxo-hept-6-ulosonate + NAD(+) + H2O = 3-dehydroquinate + NH4(+) + NADH + H(+). Functionally, catalyzes the oxidative deamination and cyclization of 2-amino-3,7-dideoxy-D-threo-hept-6-ulosonic acid (ADH) to yield 3-dehydroquinate (DHQ), which is fed into the canonical shikimic pathway of aromatic amino acid biosynthesis. This Methanopyrus kandleri (strain AV19 / DSM 6324 / JCM 9639 / NBRC 100938) protein is 3-dehydroquinate synthase.